The sequence spans 185 residues: Threonylcarbamoyl-AMP synthase (185 aa).

A YrdC-like domain is found at 4–185 (SWRVQQAAQD…IATAQIVRAG (182 aa)).

The protein belongs to the SUA5 family. TsaC subfamily.

The protein resides in the cytoplasm. It catalyses the reaction L-threonine + hydrogencarbonate + ATP = L-threonylcarbamoyladenylate + diphosphate + H2O. In terms of biological role, required for the formation of a threonylcarbamoyl group on adenosine at position 37 (t(6)A37) in tRNAs that read codons beginning with adenine. Catalyzes the conversion of L-threonine, HCO(3)(-)/CO(2) and ATP to give threonylcarbamoyl-AMP (TC-AMP) as the acyladenylate intermediate, with the release of diphosphate. This chain is Threonylcarbamoyl-AMP synthase, found in Pseudomonas syringae pv. syringae (strain B728a).